The chain runs to 81 residues: Cytotoxin (81 aa).

An N-terminal signal peptide occupies residues 1–21; it reads MKTLLLTTVVVTIVCLDLEYT. 4 cysteine pairs are disulfide-bonded: C24–C42, C35–C59, C63–C74, and C75–C80.

This sequence belongs to the three-finger toxin family. Short-chain subfamily. Type IA cytotoxin sub-subfamily. In terms of assembly, monomer in solution; Homodimer and oligomer in the presence of negatively charged lipids forming a pore with a size ranging between 20 and 30 Angstroms. Expressed by the venom gland.

The protein localises to the secreted. Its subcellular location is the target cell membrane. In terms of biological role, shows cytolytic activity on many different cells by forming pore in lipid membranes. In vivo, increases heart rate or kills the animal by cardiac arrest. In addition, it binds to heparin with high affinity, interacts with Kv channel-interacting protein 1 (KCNIP1) in a calcium-independent manner, and binds to integrin alpha-V/beta-3 (ITGAV/ITGB3) with moderate affinity. The chain is Cytotoxin from Naja sputatrix (Malayan spitting cobra).